Reading from the N-terminus, the 218-residue chain is MTQDEMKNAAAIKALEFIENDTIVGVGTGSTVNFFIEALASMKDKIAGAVSSSEESTKRLKAHGIEVFDLNSVDVLDVYVDGADEITRHMSMIKGGGAALTREKIVAAVAKKFICIADDSKQVKVLGNFPLPVEVIPMARSYVARELVKLGGDPVYRQGVTTDNGNVILDVYNLEILDPKALETQINAIVGVVTNGLFALRGADILVLGSKDGIQVIQ.

Substrate contacts are provided by residues 28-31 (TGST), 81-84 (DGAD), and 94-97 (KGGG). Glutamate 103 functions as the Proton acceptor in the catalytic mechanism. A substrate-binding site is contributed by lysine 121.

It belongs to the ribose 5-phosphate isomerase family. As to quaternary structure, homodimer.

The enzyme catalyses aldehydo-D-ribose 5-phosphate = D-ribulose 5-phosphate. The protein operates within carbohydrate degradation; pentose phosphate pathway; D-ribose 5-phosphate from D-ribulose 5-phosphate (non-oxidative stage): step 1/1. Its function is as follows. Catalyzes the reversible conversion of ribose-5-phosphate to ribulose 5-phosphate. This chain is Ribose-5-phosphate isomerase A, found in Colwellia psychrerythraea (strain 34H / ATCC BAA-681) (Vibrio psychroerythus).